A 308-amino-acid chain; its full sequence is Heme A synthase (308 aa).

The Cytoplasmic segment spans residues 1–8; that stretch reads MFKKRNLK. Residues 9 to 29 form a helical membrane-spanning segment; it reads WLSILATVIMAWVQLGGALVT. Residues 30 to 67 are Extracellular-facing; sequence KTGSENGCGASWPLCHGALLPQNLPIATIIELSHRATS. A disulfide bridge links Cys37 with Cys44. The active site involves Glu60. His63 lines the heme o pocket. The helical transmembrane segment at 68–88 threads the bilayer; that stretch reads ALSLIVVLWLVITAWKNIGYI. Topologically, residues 89–93 are cytoplasmic; sequence KEVKP. A helical membrane pass occupies residues 94–114; the sequence is LCIISVAFLLIQALVGAAAVL. Over 115-123 the chain is Extracellular; the sequence is WQQNDYVLA. Residues 124 to 144 traverse the membrane as a helical segment; sequence LHFGISLISFSSVFVLTLIIF. His125 serves as a coordination point for heme o. Over 145-161 the chain is Cytoplasmic; that stretch reads DVDQKYEANKVHIDRKL. The chain crosses the membrane as a helical span at residues 162–182; it reads RIYTWTMAICLYVGIYTGALV. The Extracellular portion of the chain corresponds to 183–215; it reads RHTKSSLAYGSWPLPFNDLIPHTEQDWVQLAHR. His214 lines the heme b pocket. Residues 216 to 236 traverse the membrane as a helical segment; sequence TLALIASISVFLAFNYAIKHY. Residues 237 to 244 lie on the Cytoplasmic side of the membrane; the sequence is QNNRTIRY. Residues 245-265 form a helical membrane-spanning segment; sequence GYTAALLLIILQIVTGALSIF. Over 266-270 the chain is Extracellular; sequence THVNL. Residues 271 to 291 traverse the membrane as a helical segment; sequence IIALLHALIITFEFGLIAYLI. His276 is a heme b binding site. The Cytoplasmic segment spans residues 292–308; that stretch reads VLLLRSQRVEKVKQNAY.

This sequence belongs to the COX15/CtaA family. Type 1 subfamily. Interacts with CtaB. Requires heme b as cofactor.

Its subcellular location is the cell membrane. The catalysed reaction is Fe(II)-heme o + 2 A + H2O = Fe(II)-heme a + 2 AH2. It functions in the pathway porphyrin-containing compound metabolism; heme A biosynthesis; heme A from heme O: step 1/1. Its function is as follows. Catalyzes the conversion of heme O to heme A by two successive hydroxylations of the methyl group at C8. The first hydroxylation forms heme I, the second hydroxylation results in an unstable dihydroxymethyl group, which spontaneously dehydrates, resulting in the formyl group of heme A. In Staphylococcus carnosus (strain TM300), this protein is Heme A synthase.